A 216-amino-acid chain; its full sequence is Probable nicotinate-nucleotide adenylyltransferase (216 aa).

It belongs to the NadD family.

The catalysed reaction is nicotinate beta-D-ribonucleotide + ATP + H(+) = deamido-NAD(+) + diphosphate. It participates in cofactor biosynthesis; NAD(+) biosynthesis; deamido-NAD(+) from nicotinate D-ribonucleotide: step 1/1. Catalyzes the reversible adenylation of nicotinate mononucleotide (NaMN) to nicotinic acid adenine dinucleotide (NaAD). The protein is Probable nicotinate-nucleotide adenylyltransferase of Geotalea uraniireducens (strain Rf4) (Geobacter uraniireducens).